A 230-amino-acid chain; its full sequence is Cytidylate kinase (230 aa).

Position 12 to 20 (12 to 20) interacts with ATP; it reads GPSGAGKGT.

This sequence belongs to the cytidylate kinase family. Type 1 subfamily.

The protein resides in the cytoplasm. It catalyses the reaction CMP + ATP = CDP + ADP. It carries out the reaction dCMP + ATP = dCDP + ADP. This is Cytidylate kinase from Yersinia enterocolitica serotype O:8 / biotype 1B (strain NCTC 13174 / 8081).